Reading from the N-terminus, the 115-residue chain is Nucleoid-associated protein Rpic_1036 (115 aa).

Belongs to the YbaB/EbfC family. As to quaternary structure, homodimer.

The protein resides in the cytoplasm. The protein localises to the nucleoid. Binds to DNA and alters its conformation. May be involved in regulation of gene expression, nucleoid organization and DNA protection. This Ralstonia pickettii (strain 12J) protein is Nucleoid-associated protein Rpic_1036.